A 430-amino-acid chain; its full sequence is MATLILGSQWGDEGKGKLTDILCPKAQICARAAGGHNAGHSIVANGVEYDFHLLPSGLVNPNCMNLIGSSVVFHVPSFFSELSKLEEKGLTDVHNRILVSDRCHVNFDLHAAVDGLEEVELGDRKIGTTGRGIGPSYSTKMARSGVRIHEIFNEEIFERKLRQLAAGYKKRFGDLLKYDVEEEIARFKEYRVKLARYTVDAIQYMKEAQDRGYKILIEGANALMLDIDYGTYPYVTSSNTGLGGIITGLAINPTKIDNIIGVVKAYTTRVGGGPFKTEDLEEAGTKLQEIGREWGVSTGRKRRCGWLDLVVLKYSTAINNYTALNLTKLDILDTFETIKVAVAYKDPQTGEEVEYFPADLDILDSLEVVYKELPGWNKPITDCKTYYDLPKEARAYIEFIEEFVGVPICYIGTGPKREDMIVRKTSAIKE.

GTP contacts are provided by residues 11 to 17 and 39 to 41; these read GDEGKGK and GHS. Asp-12 (proton acceptor) is an active-site residue. Asp-12 and Gly-39 together coordinate Mg(2+). IMP contacts are provided by residues 12 to 15, 37 to 40, Thr-129, Arg-143, Asn-221, Thr-236, and Arg-300; these read DEGK and NAGH. His-40 (proton donor) is an active-site residue. A substrate-binding site is contributed by 296 to 302; the sequence is VSTGRKR. GTP contacts are provided by residues Arg-302, 328 to 330, and 412 to 414; these read KLD and GTG.

It belongs to the adenylosuccinate synthetase family. As to quaternary structure, homodimer. The cofactor is Mg(2+).

It is found in the cytoplasm. It carries out the reaction IMP + L-aspartate + GTP = N(6)-(1,2-dicarboxyethyl)-AMP + GDP + phosphate + 2 H(+). It participates in purine metabolism; AMP biosynthesis via de novo pathway; AMP from IMP: step 1/2. Its function is as follows. Plays an important role in the de novo pathway and in the salvage pathway of purine nucleotide biosynthesis. Catalyzes the first committed step in the biosynthesis of AMP from IMP. The chain is Adenylosuccinate synthetase from Neurospora crassa (strain ATCC 24698 / 74-OR23-1A / CBS 708.71 / DSM 1257 / FGSC 987).